The sequence spans 248 residues: Triosephosphate isomerase (248 aa).

A Phosphothreonine modification is found at threonine 4. Asparagine 10 and lysine 12 together coordinate substrate. Serine 71 is subject to Phosphoserine. Residue histidine 95 is the Electrophile of the active site. The active-site Proton acceptor is the glutamate 165. Serine 215 is subject to Phosphoserine. Lysine 223 is covalently cross-linked (Glycyl lysine isopeptide (Lys-Gly) (interchain with G-Cter in ubiquitin)).

This sequence belongs to the triosephosphate isomerase family. In terms of assembly, homodimer.

It catalyses the reaction D-glyceraldehyde 3-phosphate = dihydroxyacetone phosphate. The protein operates within carbohydrate biosynthesis; gluconeogenesis. It functions in the pathway carbohydrate degradation; glycolysis; D-glyceraldehyde 3-phosphate from glycerone phosphate: step 1/1. The sequence is that of Triosephosphate isomerase (TPI1) from Saccharomyces cerevisiae (strain ATCC 204508 / S288c) (Baker's yeast).